The following is a 1281-amino-acid chain: Zinc finger transcription factor Trps1 (1281 aa).

Disordered regions lie at residues 1–101 and 116–204; these read MVRK…VSFP and PAAG…KGDL. Composition is skewed to polar residues over residues 21 to 31 and 40 to 49; these read LEPTATESKVS and DQMSENTDQS. Lys-29 is covalently cross-linked (Glycyl lysine isopeptide (Lys-Gly) (interchain with G-Cter in SUMO2)). Residues Ser-90 and Ser-127 each carry the phosphoserine modification. Residues 148–162 show a composition bias toward basic and acidic residues; the sequence is LETKEEHKMSPKATE. Residues 166–189 show a composition bias toward polar residues; the sequence is PVQSGQANCQGLSPVSVASKNPQV. 2 positions are modified to phosphoserine: Ser-178 and Ser-216. The segment at 222–247 adopts a C2H2-type 1; atypical zinc-finger fold; it reads FKCNICGYGYYGNDPTDLIKHFRKYH. Lys-263 participates in a covalent cross-link: Glycyl lysine isopeptide (Lys-Gly) (interchain with G-Cter in SUMO2). The C2H2-type 2; atypical zinc finger occupies 333–358; the sequence is FRCKFCNFTYMGNSSTELEQHFLQTH. Positions 365–393 are disordered; the sequence is SLPSSEGVKPSEKNSNKSIPALRASDSGD. Glycyl lysine isopeptide (Lys-Gly) (interchain with G-Cter in SUMO2) cross-links involve residues Lys-418, Lys-457, Lys-474, and Lys-488. Residues 484-515 are disordered; sequence NDLAKSVEGEPLTKPEKGLSGAKKKDFPSKGA. The span at 488-515 shows a compositional bias: basic and acidic residues; sequence KSVEGEPLTKPEKGLSGAKKKDFPSKGA. The segment at 614–637 adopts a C2H2-type 3; atypical zinc-finger fold; that stretch reads HQCHQCSFSTPDVDVLLFHYETVH. Positions 635–819 are mediates interaction with GLI3; that stretch reads TVHESQASDV…SLGLLTPVSS (185 aa). Residue Lys-645 forms a Glycyl lysine isopeptide (Lys-Gly) (interchain with G-Cter in SUMO2) linkage. 2 C2H2-type zinc fingers span residues 666 to 689 and 692 to 715; these read HSCT…RRAH and YKCR…NTVH. Residues Lys-737 and Lys-755 each participate in a glycyl lysine isopeptide (Lys-Gly) (interchain with G-Cter in SUMO2) cross-link. Lys-766 participates in a covalent cross-link: Glycyl lysine isopeptide (Lys-Gly) (interchain with G-Cter in SUMO1); alternate. Lys-766 participates in a covalent cross-link: Glycyl lysine isopeptide (Lys-Gly) (interchain with G-Cter in SUMO2); alternate. Glycyl lysine isopeptide (Lys-Gly) (interchain with G-Cter in SUMO2) cross-links involve residues Lys-825 and Lys-850. The tract at residues 856–885 is disordered; it reads APAGSEKSASLTQQYPASGESKTKDESQSL. Polar residues predominate over residues 862–871; sequence KSASLTQQYP. Residues Lys-877 and Lys-879 each participate in a glycyl lysine isopeptide (Lys-Gly) (interchain with G-Cter in SUMO2) cross-link. Residues 896 to 920 form a GATA-type zinc finger; sequence CANCLTTKTSLWRKNANGGYVCNAC. Residues Lys-925, Lys-937, and Lys-965 each participate in a glycyl lysine isopeptide (Lys-Gly) (interchain with G-Cter in SUMO2) cross-link. Over residues 961 to 977 the composition is skewed to polar residues; the sequence is EQLNKQQRGSGEEQVNG. A disordered region spans residues 961–1000; that stretch reads EQLNKQQRGSGEEQVNGSPLERRSEDHLSESHPREIPLPS. Residue Ser-978 is modified to Phosphoserine. The segment covering 980–995 has biased composition (basic and acidic residues); that stretch reads LERRSEDHLSESHPRE. Residues 985–1184 are mediates interaction with RNF4; that stretch reads EDHLSESHPR…PTANGASKEK (200 aa). Glycyl lysine isopeptide (Lys-Gly) (interchain with G-Cter in SUMO2) cross-links involve residues Lys-1003, Lys-1012, Lys-1030, and Lys-1040. A compositionally biased stretch (polar residues) spans 1040–1049; it reads KSPQESTGDP. The interval 1040 to 1078 is disordered; it reads KSPQESTGDPGNSSSVSDGKGSSERGSPIEKYMRPAKHP. Residue Ser-1041 is modified to Phosphoserine. Over residues 1050–1059 the composition is skewed to low complexity; it reads GNSSSVSDGK. Residues 1060 to 1072 are compositionally biased toward basic and acidic residues; that stretch reads GSSERGSPIEKYM. Position 1066 is a phosphoserine (Ser-1066). Residue Lys-1070 forms a Glycyl lysine isopeptide (Lys-Gly) (interchain with G-Cter in SUMO2) linkage. Ser-1085 carries the phosphoserine modification. The transcriptional repressor domain stretch occupies residues 1163–1281; it reads PLDLAIKHSR…QAEKNGKPKE (119 aa). The tract at residues 1169-1195 is disordered; it reads KHSRPGPTANGASKEKTKAPPTVKNED. Glycyl lysine isopeptide (Lys-Gly) (interchain with G-Cter in SUMO2); alternate cross-links involve residues Lys-1192 and Lys-1201. Glycyl lysine isopeptide (Lys-Gly) (interchain with G-Cter in SUMO); alternate cross-links involve residues Lys-1192 and Lys-1201. Lys-1201 participates in a covalent cross-link: Glycyl lysine isopeptide (Lys-Gly) (interchain with G-Cter in SUMO1); alternate. 2 C2H2-type zinc fingers span residues 1215 to 1237 and 1243 to 1267; these read TKCV…MSCH and FQCS…RGLH.

Interacts with RNF4; regulates TRPS1 repressor activity. Interacts specifically with the activator form of GLI3 (GLI3A) but not with the repressor form (GLI3R). Post-translationally, sumoylated. Sumoylation in the repressor domain inhibits the transcription repression activity. Sumoylation on Lys-1201 is the major site. Appears to be sumoylated on multiple sites. As to expression, in the embryo, expression is detected in both visceral and skeletal tissues. Found in the maxilla, mandible, snout, prospective phalanges and in the femoral head within the developing hip. Also expressed in the hair follicles.

It localises to the nucleus. Its function is as follows. Transcriptional repressor. Binds specifically to GATA sequences and represses expression of GATA-regulated genes at selected sites and stages in vertebrate development. Regulates chondrocyte proliferation and differentiation. Executes multiple functions in proliferating chondrocytes, expanding the region of distal chondrocytes, activating proliferation in columnar cells and supporting the differentiation of columnar into hypertrophic chondrocytes. In Mus musculus (Mouse), this protein is Zinc finger transcription factor Trps1 (Trps1).